The primary structure comprises 271 residues: Enolase-phosphatase E1 (271 aa).

The Mg(2+) site is built by Asp-16 and Glu-18. Residues 150-151 and Lys-199 contribute to the substrate site; that span reads SS. Residue Asp-226 coordinates Mg(2+).

The protein belongs to the HAD-like hydrolase superfamily. MasA/MtnC family. Monomer. It depends on Mg(2+) as a cofactor.

The protein resides in the cytoplasm. The protein localises to the nucleus. It carries out the reaction 5-methylsulfanyl-2,3-dioxopentyl phosphate + H2O = 1,2-dihydroxy-5-(methylsulfanyl)pent-1-en-3-one + phosphate. It participates in amino-acid biosynthesis; L-methionine biosynthesis via salvage pathway; L-methionine from S-methyl-5-thio-alpha-D-ribose 1-phosphate: step 3/6. It functions in the pathway amino-acid biosynthesis; L-methionine biosynthesis via salvage pathway; L-methionine from S-methyl-5-thio-alpha-D-ribose 1-phosphate: step 4/6. Functionally, bifunctional enzyme that catalyzes the enolization of 2,3-diketo-5-methylthiopentyl-1-phosphate (DK-MTP-1-P) into the intermediate 2-hydroxy-3-keto-5-methylthiopentenyl-1-phosphate (HK-MTPenyl-1-P), which is then dephosphorylated to form the acireductone 1,2-dihydroxy-3-keto-5-methylthiopentene (DHK-MTPene). The sequence is that of Enolase-phosphatase E1 from Candida dubliniensis (strain CD36 / ATCC MYA-646 / CBS 7987 / NCPF 3949 / NRRL Y-17841) (Yeast).